A 955-amino-acid chain; its full sequence is Leucine--tRNA ligase (955 aa).

The short motif at 51–61 (PYLNGVLHAGH) is the 'HIGH' region element. Residues 647 to 651 (KLSKS) carry the 'KMSKS' region motif. An ATP-binding site is contributed by K650.

The protein belongs to the class-I aminoacyl-tRNA synthetase family.

It is found in the cytoplasm. It catalyses the reaction tRNA(Leu) + L-leucine + ATP = L-leucyl-tRNA(Leu) + AMP + diphosphate. The protein is Leucine--tRNA ligase of Methanococcus maripaludis (strain C7 / ATCC BAA-1331).